We begin with the raw amino-acid sequence, 222 residues long: Ribose-5-phosphate isomerase A (222 aa).

Substrate is bound by residues 28-31, 81-84, and 94-97; these read TGST, DGAD, and KGGG. The active-site Proton acceptor is the glutamate 103. Lysine 121 serves as a coordination point for substrate.

It belongs to the ribose 5-phosphate isomerase family. As to quaternary structure, homodimer.

The enzyme catalyses aldehydo-D-ribose 5-phosphate = D-ribulose 5-phosphate. The protein operates within carbohydrate degradation; pentose phosphate pathway; D-ribose 5-phosphate from D-ribulose 5-phosphate (non-oxidative stage): step 1/1. Catalyzes the reversible conversion of ribose-5-phosphate to ribulose 5-phosphate. The protein is Ribose-5-phosphate isomerase A of Azoarcus sp. (strain BH72).